The chain runs to 447 residues: Zinc finger protein ZIC 1 (447 aa).

The C2H2-type 1; atypical zinc finger occupies 225–260; it reads LICKWIEPEQLANPKKSCNKTFSTMHELVTHVTVEH. The C2H2-type 2; atypical zinc finger occupies 269–296; it reads HICFWEECPREGKPFKAKYKLVNHIRVH. C2H2-type zinc fingers lie at residues 302–326, 332–356, and 362–384; these read FPCP…KRTH, FKCE…MHVH, and YLCK…MKVH. Residues 375-434 form a disordered region; the sequence is SSLRKHMKVHESSSQGSQPSPAASSGYESSTPPTIVSPTTDNPTTSSMSPSSSAVHHTAG. Residues 386–427 show a composition bias toward low complexity; that stretch reads SSSQGSQPSPAASSGYESSTPPTIVSPTTDNPTTSSMSPSSS.

The protein belongs to the GLI C2H2-type zinc-finger protein family. In terms of assembly, interacts (via the C2H2-type domains 3, 4 and 5) with MDFIC (via the C2H2-type domains 3, 4 and 5). Interacts with GLI1; the interaction enhances transcription activation. Interacts with GLI2. Interacts with GLI3; the interaction enhances transcription activation. Expressed in osteoblasts (at protein level). Expressed in the CNS. A high level expression is seen in the cerebellum, while a low level expression is seen in the olfactory bulb, diencephalon, and brainstem. Expressed in lumbar spine and iliac crest.

Its subcellular location is the nucleus. The protein resides in the cytoplasm. Functionally, acts as a transcriptional activator. Involved in neurogenesis. Plays important roles in the early stage of organogenesis of the CNS, as well as during dorsal spinal cord development and maturation of the cerebellum. Involved in the spatial distribution of mossy fiber (MF) neurons within the pontine gray nucleus (PGN). Plays a role in the regulation of MF axon pathway choice. Promotes MF migration towards ipsilaterally-located cerebellar territories. May have a role in shear flow mechanotransduction in osteocytes. Retains nuclear GLI1 and GLI3 in the cytoplasm. Binds to the minimal GLI-consensus sequence 5'-TGGGTGGTC-3'. This chain is Zinc finger protein ZIC 1 (Zic1), found in Mus musculus (Mouse).